Here is a 196-residue protein sequence, read N- to C-terminus: ATP-dependent Clp protease proteolytic subunit (196 aa).

Ser-99 (nucleophile) is an active-site residue. His-124 is a catalytic residue.

The protein belongs to the peptidase S14 family. Fourteen ClpP subunits assemble into 2 heptameric rings which stack back to back to give a disk-like structure with a central cavity, resembling the structure of eukaryotic proteasomes.

It localises to the cytoplasm. It carries out the reaction Hydrolysis of proteins to small peptides in the presence of ATP and magnesium. alpha-casein is the usual test substrate. In the absence of ATP, only oligopeptides shorter than five residues are hydrolyzed (such as succinyl-Leu-Tyr-|-NHMec, and Leu-Tyr-Leu-|-Tyr-Trp, in which cleavage of the -Tyr-|-Leu- and -Tyr-|-Trp bonds also occurs).. Cleaves peptides in various proteins in a process that requires ATP hydrolysis. Has a chymotrypsin-like activity. Plays a major role in the degradation of misfolded proteins. This chain is ATP-dependent Clp protease proteolytic subunit, found in Campylobacter lari (strain RM2100 / D67 / ATCC BAA-1060).